The chain runs to 76 residues: ATP synthase subunit 9, mitochondrial (76 aa).

2 helical membrane-spanning segments follow: residues 14-34 and 52-72; these read MATL…VALI and ILGF…SFLL.

It belongs to the ATPase C chain family. As to quaternary structure, F-type ATPases have 2 components, CF(1) - the catalytic core - and CF(0) - the membrane proton channel. CF(1) has five subunits: alpha(3), beta(3), gamma(1), delta(1), epsilon(1). CF(0) has three main subunits: a, b and c.

It is found in the mitochondrion membrane. In terms of biological role, mitochondrial membrane ATP synthase (F(1)F(0) ATP synthase or Complex V) produces ATP from ADP in the presence of a proton gradient across the membrane which is generated by electron transport complexes of the respiratory chain. F-type ATPases consist of two structural domains, F(1) - containing the extramembraneous catalytic core and F(0) - containing the membrane proton channel, linked together by a central stalk and a peripheral stalk. During catalysis, ATP synthesis in the catalytic domain of F(1) is coupled via a rotary mechanism of the central stalk subunits to proton translocation. Part of the complex F(0) domain. A homomeric c-ring of probably 10 subunits is part of the complex rotary element. In Debaryomyces hansenii (strain ATCC 36239 / CBS 767 / BCRC 21394 / JCM 1990 / NBRC 0083 / IGC 2968) (Yeast), this protein is ATP synthase subunit 9, mitochondrial (ATP9).